Reading from the N-terminus, the 306-residue chain is Metal ABC transporter substrate-binding lipoprotein SloC (306 aa).

A signal peptide spans 1-19; it reads MKKLSLLLLVCLSLLGLFA. C20 is lipidated: N-palmitoyl cysteine. Residue C20 is the site of S-diacylglycerol cysteine attachment. H64, H136, E202, and D277 together coordinate a divalent metal cation.

It belongs to the bacterial solute-binding protein 9 family. Lipoprotein receptor antigen (Lrai) subfamily.

It localises to the cell membrane. Its function is as follows. Part of the ATP-binding cassette (ABC) transport system SloABC involved in metal import. Binds a metal with high affinity and specificity and delivers it to the membrane permease for translocation into the cytoplasm. May act as an adhesin which is involved on adherence to extracellular matrix. It is an important factor in pathogenesis and infection. May contribute to the formation and accumulation of dental plaque. The polypeptide is Metal ABC transporter substrate-binding lipoprotein SloC (sloC) (Streptococcus mutans serotype c (strain ATCC 700610 / UA159)).